Reading from the N-terminus, the 310-residue chain is AA9 family lytic polysaccharide monooxygenase A (310 aa).

A signal peptide spans 1 to 21 (MPSTKVAALSAVLALASTVAG). Cu(2+) is bound by residues His-22 and His-107. Disulfide bonds link Cys-77–Cys-199 and Cys-118–Cys-122. N-linked (GlcNAc...) asparagine glycosylation is found at Asn-121 and Asn-159. His-185 is a binding site for O2. Tyr-196 contributes to the Cu(2+) binding site.

This sequence belongs to the polysaccharide monooxygenase AA9 family. It depends on Cu(2+) as a cofactor.

The protein localises to the secreted. The catalysed reaction is [(1-&gt;4)-beta-D-glucosyl]n+m + reduced acceptor + O2 = 4-dehydro-beta-D-glucosyl-[(1-&gt;4)-beta-D-glucosyl]n-1 + [(1-&gt;4)-beta-D-glucosyl]m + acceptor + H2O.. In terms of biological role, lytic polysaccharide monooxygenase (LPMO) that depolymerizes crystalline and amorphous polysaccharides via the oxidation of scissile alpha- or beta-(1-4)-glycosidic bonds, yielding C1, C4 as well as C6 oxidation products. Catalysis by LPMOs requires the reduction of the active-site copper from Cu(II) to Cu(I) by a reducing agent and H(2)O(2) or O(2) as a cosubstrate. Active on cellulose, but not on xylan, starch, or chitin. This Talaromyces pinophilus (Penicillium pinophilum) protein is AA9 family lytic polysaccharide monooxygenase A.